The chain runs to 435 residues: D-amino acid dehydrogenase (435 aa).

Residue 3–17 participates in FAD binding; the sequence is VLILGSGVIGTTSAW.

The protein belongs to the DadA oxidoreductase family. FAD serves as cofactor.

It catalyses the reaction a D-alpha-amino acid + A + H2O = a 2-oxocarboxylate + AH2 + NH4(+). Its pathway is amino-acid degradation; D-alanine degradation; NH(3) and pyruvate from D-alanine: step 1/1. Functionally, oxidative deamination of D-amino acids. This Xylella fastidiosa (strain M23) protein is D-amino acid dehydrogenase.